Consider the following 144-residue polypeptide: Large ribosomal subunit protein uL16 (144 aa).

Belongs to the universal ribosomal protein uL16 family. In terms of assembly, part of the 50S ribosomal subunit.

Its function is as follows. Binds 23S rRNA and is also seen to make contacts with the A and possibly P site tRNAs. This Bacillus anthracis (strain A0248) protein is Large ribosomal subunit protein uL16.